The primary structure comprises 271 residues: Phosphate import ATP-binding protein PstB 1 (271 aa).

The ABC transporter domain occupies 25 to 266 (LTVEHLNLYY…PTQRRTEDYI (242 aa)). ATP is bound at residue 57–64 (GPSGCGKS).

Belongs to the ABC transporter superfamily. Phosphate importer (TC 3.A.1.7) family. In terms of assembly, the complex is composed of two ATP-binding proteins (PstB), two transmembrane proteins (PstC and PstA) and a solute-binding protein (PstS).

It localises to the cell inner membrane. The enzyme catalyses phosphate(out) + ATP + H2O = ADP + 2 phosphate(in) + H(+). Functionally, part of the ABC transporter complex PstSACB involved in phosphate import. Responsible for energy coupling to the transport system. The sequence is that of Phosphate import ATP-binding protein PstB 1 from Pectobacterium atrosepticum (strain SCRI 1043 / ATCC BAA-672) (Erwinia carotovora subsp. atroseptica).